Consider the following 423-residue polypeptide: Aspartate aminotransferase, mitochondrial (423 aa).

Residues 1-22 (MALLQSRLLLSAPRRAAATARA) constitute a mitochondrion transit peptide. Substrate-binding residues include G58, W155, and N208. At K272 the chain carries N6-(pyridoxal phosphate)lysine. R400 contacts substrate.

Belongs to the class-I pyridoxal-phosphate-dependent aminotransferase family. Homodimer. Pyridoxal 5'-phosphate serves as cofactor. Detected in heart (at protein level).

The protein localises to the mitochondrion matrix. The enzyme catalyses L-aspartate + 2-oxoglutarate = oxaloacetate + L-glutamate. It catalyses the reaction L-kynurenine + 2-oxoglutarate = kynurenate + L-glutamate + H2O. Functionally, catalyzes the irreversible transamination of the L-tryptophan metabolite L-kynurenine to form kynurenic acid (KA). As a member of the malate-aspartate shuttle, it has a key role in the intracellular NAD(H) redox balance. Is important for metabolite exchange between mitochondria and cytosol, and for amino acid metabolism. The sequence is that of Aspartate aminotransferase, mitochondrial (GOT2) from Gallus gallus (Chicken).